The chain runs to 249 residues: Metallo-beta-lactamase type 2 (249 aa).

Positions 1–22 (MLKKIKISLILALGLTSLQAFG) are cleaved as a signal peptide. Residues H98, H100, D102, H161, and C180 each coordinate Zn(2+). A substrate-binding site is contributed by K183. H222 is a Zn(2+) binding site.

It belongs to the metallo-beta-lactamase superfamily. Class-B beta-lactamase family. Monomer. The cofactor is Zn(2+).

It is found in the periplasm. The catalysed reaction is a beta-lactam + H2O = a substituted beta-amino acid. Its activity is regulated as follows. Inhibited by chelating agents such as EDTA, 1-10 phenanthroline and pyridine-2,6-dicarboxylic acid. Its function is as follows. Confers resistance to the different beta-lactams antibiotics (penicillin, cephalosporin and carbapenem) via the hydrolysis of the beta-lactam ring. The protein is Metallo-beta-lactamase type 2 (blaB1) of Elizabethkingia meningoseptica (Chryseobacterium meningosepticum).